The chain runs to 223 residues: UPF0441 protein YgiB (223 aa).

Over residues T178–T195 the composition is skewed to low complexity. The tract at residues T178–G223 is disordered. Polar residues predominate over residues A204 to G223.

Belongs to the UPF0441 family.

In Shigella dysenteriae serotype 1 (strain Sd197), this protein is UPF0441 protein YgiB.